A 240-amino-acid polypeptide reads, in one-letter code: Large ribosomal subunit protein bL25 (240 aa).

2 disordered regions span residues 1 to 21 (MAEN…PARR) and 204 to 240 (GAAP…KAKK). Residues 204 to 229 (GAAPAAGAAAPAGGAAPAAGAAPAKG) are compositionally biased toward low complexity. Basic and acidic residues predominate over residues 230–240 (GEAKGGDKAKK).

This sequence belongs to the bacterial ribosomal protein bL25 family. CTC subfamily. Part of the 50S ribosomal subunit; part of the 5S rRNA/L5/L18/L25 subcomplex. Contacts the 5S rRNA. Binds to the 5S rRNA independently of L5 and L18.

In terms of biological role, this is one of the proteins that binds to the 5S RNA in the ribosome where it forms part of the central protuberance. The polypeptide is Large ribosomal subunit protein bL25 (Anaeromyxobacter dehalogenans (strain 2CP-1 / ATCC BAA-258)).